Consider the following 258-residue polypeptide: Small ribosomal subunit protein uS2 (258 aa).

Positions 226–258 (KQGQDDEETLEVDFKENADGSEEIVSAEENPED) are disordered. Residues 244-258 (DGSEEIVSAEENPED) show a composition bias toward acidic residues.

It belongs to the universal ribosomal protein uS2 family.

The polypeptide is Small ribosomal subunit protein uS2 (Lactobacillus acidophilus (strain ATCC 700396 / NCK56 / N2 / NCFM)).